A 433-amino-acid chain; its full sequence is Zinc finger protein CONSTANS-LIKE 15 (433 aa).

Cys-9, Cys-12, Cys-32, His-37, Cys-52, Cys-55, Cys-75, and His-80 together coordinate Zn(2+). A B box-type 1; atypical zinc finger spans residues 9-51 (CDFCGERTAVLFCRADTAKLCLPCDQQVHTANLLSRKHVRSQI). The B box-type 2; atypical zinc finger occupies 52–94 (CDNCGNEPVSVRCFTDNLILCQECDWDVHGSCSVSDAHVRSAV). Residues 319–353 (DDYKRSTSGQVQPTKSESNNRPITFGSEKGSNSSS) are disordered. Positions 324–340 (STSGQVQPTKSESNNRP) are enriched in polar residues. Residues 374–398 (TKADLERLAQNRGDAMQRYKEKRKT) adopt a coiled-coil conformation. One can recognise a CCT domain in the interval 385-427 (RGDAMQRYKEKRKTRRYDKTIRYESRKARADTRLRVRGRFVKA).

It belongs to the CONSTANS family.

The protein localises to the nucleus. The polypeptide is Zinc finger protein CONSTANS-LIKE 15 (COL15) (Arabidopsis thaliana (Mouse-ear cress)).